We begin with the raw amino-acid sequence, 340 residues long: Flap endonuclease 1 (340 aa).

The N-domain stretch occupies residues 1–98 (MGVDLGGLVE…ETIKARAEVR (98 aa)). Residues Asp-27, Asp-80, Glu-151, Glu-153, Asp-172, Asp-174, and Asp-235 each contribute to the Mg(2+) site. Residues 115–256 (EAYKYAQAST…TALKLVKKHG (142 aa)) form an I-domain region. The segment at 332 to 340 (KQKTLSSWF) is interaction with PCNA.

It belongs to the XPG/RAD2 endonuclease family. FEN1 subfamily. In terms of assembly, interacts with PCNA. PCNA stimulates the nuclease activity without altering cleavage specificity. Mg(2+) serves as cofactor.

Functionally, structure-specific nuclease with 5'-flap endonuclease and 5'-3' exonuclease activities involved in DNA replication and repair. During DNA replication, cleaves the 5'-overhanging flap structure that is generated by displacement synthesis when DNA polymerase encounters the 5'-end of a downstream Okazaki fragment. Binds the unpaired 3'-DNA end and kinks the DNA to facilitate 5' cleavage specificity. Cleaves one nucleotide into the double-stranded DNA from the junction in flap DNA, leaving a nick for ligation. Also involved in the base excision repair (BER) pathway. Acts as a genome stabilization factor that prevents flaps from equilibrating into structures that lead to duplications and deletions. Also possesses 5'-3' exonuclease activity on nicked or gapped double-stranded DNA. This is Flap endonuclease 1 from Methanocella arvoryzae (strain DSM 22066 / NBRC 105507 / MRE50).